Consider the following 130-residue polypeptide: MAGRAGRTRPRTLRDAIPDCALRSQTLESLDARYVSRDGAGDAAVWFEDMTPAELEVIFPTTDAKLNYLSRTQRLASLLTYAGPIKAPDGPAAPHTQDTACVHGELLARKRERFAAVINRFLDLHQILRG.

The protein belongs to the herpesviridae TRM2 protein family. In terms of assembly, associates with TRM1 and TRM3 to form the tripartite terminase complex.

It localises to the host nucleus. Component of the molecular motor that translocates viral genomic DNA in empty capsid during DNA packaging. Forms a tripartite terminase complex together with TRM1 and TRM3 in the host cytoplasm. Once the complex reaches the host nucleus, it interacts with the capsid portal vertex. This portal forms a ring in which genomic DNA is translocated into the capsid. In Homo sapiens (Human), this protein is Tripartite terminase subunit 2.